The sequence spans 221 residues: Large ribosomal subunit protein uL3 (221 aa).

The protein belongs to the universal ribosomal protein uL3 family. As to quaternary structure, part of the 50S ribosomal subunit. Forms a cluster with proteins L14 and L19.

One of the primary rRNA binding proteins, it binds directly near the 3'-end of the 23S rRNA, where it nucleates assembly of the 50S subunit. This is Large ribosomal subunit protein uL3 from Chlamydia trachomatis serovar L2 (strain ATCC VR-902B / DSM 19102 / 434/Bu).